We begin with the raw amino-acid sequence, 308 residues long: Elongation factor Ts (308 aa).

The tract at residues 80–83 is involved in Mg(2+) ion dislocation from EF-Tu; that stretch reads TDFV.

The protein belongs to the EF-Ts family.

It is found in the cytoplasm. Functionally, associates with the EF-Tu.GDP complex and induces the exchange of GDP to GTP. It remains bound to the aminoacyl-tRNA.EF-Tu.GTP complex up to the GTP hydrolysis stage on the ribosome. This chain is Elongation factor Ts, found in Allorhizobium ampelinum (strain ATCC BAA-846 / DSM 112012 / S4) (Agrobacterium vitis (strain S4)).